We begin with the raw amino-acid sequence, 253 residues long: Alpha-acetolactate decarboxylase (253 aa).

The protein belongs to the alpha-acetolactate decarboxylase family.

It carries out the reaction (2S)-2-acetolactate + H(+) = (R)-acetoin + CO2. The protein operates within polyol metabolism; (R,R)-butane-2,3-diol biosynthesis; (R,R)-butane-2,3-diol from pyruvate: step 2/3. Its function is as follows. Converts acetolactate into acetoin. The polypeptide is Alpha-acetolactate decarboxylase (alsD) (Bacillus licheniformis (strain ATCC 14580 / DSM 13 / JCM 2505 / CCUG 7422 / NBRC 12200 / NCIMB 9375 / NCTC 10341 / NRRL NRS-1264 / Gibson 46)).